Reading from the N-terminus, the 257-residue chain is uncharacterized protein (257 aa).

Residues 7–27 (LMLGICLVLLIILIVGYVIMT) traverse the membrane as a helical segment.

The protein belongs to the staphylococcal tandem lipoprotein family.

Its subcellular location is the cell membrane. This is an uncharacterized protein from Staphylococcus aureus (strain Mu50 / ATCC 700699).